A 349-amino-acid chain; its full sequence is Protein RAE1 (349 aa).

The interval 1–21 is disordered; that stretch reads MATFGAPATANSNPNKSYEVT. An N-acetylalanine modification is found at alanine 2. Positions 9-21 are enriched in polar residues; that stretch reads TANSNPNKSYEVT. WD repeat units lie at residues 23–62, 70–109, 112–151, 153–190, and 244–283; these read SPAD…ASLA, SHDQ…QPVT, MHEG…PVHT, QLPD…TEFK, and NDIY…RLKA. Positions 128–144 match the DWD box motif; that stretch reads LLATGSWDKTLKYWDTR.

It belongs to the WD repeat rae1 family. In terms of assembly, part of the nuclear pore complex (NPC). The NPC has an eight-fold symmetrical structure comprising a central transport channel and two rings, the cytoplasmic and nuclear rings, to which eight filaments are attached. The cytoplasmic filaments have loose ends, while the nuclear filaments are joined in a distal ring, forming a nuclear basket. NPCs are highly dynamic in configuration and composition, and can be devided in 3 subcomplexes, the NUP62 subcomplex, the NUP107-160 subcomplex and the NUP93 subcomplex, containing approximately 30 different nucleoporin proteins. Interacts with DDB1A.

It is found in the nucleus envelope. Its subcellular location is the nucleus. The protein localises to the nuclear pore complex. The protein is Protein RAE1 of Arabidopsis thaliana (Mouse-ear cress).